Reading from the N-terminus, the 175-residue chain is Probable DNA replication complex GINS protein PSF2 (175 aa).

Belongs to the GINS2/PSF2 family. In terms of assembly, component of the GINS complex which is a heterotetramer of SLD5, PSF1, PSF2 and PSF3.

The protein localises to the nucleus. In terms of biological role, the GINS complex plays an essential role in the initiation of DNA replication. This is Probable DNA replication complex GINS protein PSF2 from Encephalitozoon cuniculi (strain GB-M1) (Microsporidian parasite).